Consider the following 279-residue polypeptide: Dihydropteroate synthase type-1 (279 aa).

The Pterin-binding domain occupies 1-258 (MVTVFGILNL…APGDLRSAIT (258 aa)). Asn9 is a Mg(2+) binding site. Residues Asp82, Asn101, Asp173, Lys212, and 246–248 (RTH) each bind (7,8-dihydropterin-6-yl)methyl diphosphate.

The protein belongs to the DHPS family. As to quaternary structure, homodimer or homotrimer. The cofactor is Mg(2+).

It carries out the reaction (7,8-dihydropterin-6-yl)methyl diphosphate + 4-aminobenzoate = 7,8-dihydropteroate + diphosphate. It functions in the pathway cofactor biosynthesis; tetrahydrofolate biosynthesis; 7,8-dihydrofolate from 2-amino-4-hydroxy-6-hydroxymethyl-7,8-dihydropteridine diphosphate and 4-aminobenzoate: step 1/2. Catalyzes the condensation of para-aminobenzoate (pABA) with 6-hydroxymethyl-7,8-dihydropterin diphosphate (DHPt-PP) to form 7,8-dihydropteroate (H2Pte), the immediate precursor of folate derivatives. In Corynebacterium glutamicum (Brevibacterium saccharolyticum), this protein is Dihydropteroate synthase type-1 (sulI).